Reading from the N-terminus, the 245-residue chain is Probable phosphatase YcdX (245 aa).

Residues histidine 7, histidine 9, histidine 15, histidine 40, glutamate 73, histidine 101, histidine 131, aspartate 192, and histidine 194 each contribute to the Zn(2+) site.

It belongs to the PHP family. As to quaternary structure, homotrimer. It depends on Zn(2+) as a cofactor.

The chain is Probable phosphatase YcdX from Salmonella agona (strain SL483).